The chain runs to 780 residues: uncharacterized protein (780 aa).

The 71-residue stretch at 10–80 folds into the BTB domain; it reads NNNIIKLNIG…MRTGTFTLPY (71 aa).

This is an uncharacterized protein from Dictyostelium discoideum (Social amoeba).